Reading from the N-terminus, the 1039-residue chain is L-arabinokinase (1039 aa).

The chain crosses the membrane as a helical span at residues 662-678; sequence AAYVAGTILVLMIELGV. 693–703 contacts ATP; that stretch reads PEGKGVSSSAA. Asp745 (proton acceptor) is an active-site residue.

Belongs to the GHMP kinase family.

The protein resides in the membrane. The enzyme catalyses L-arabinose + ATP = beta-L-arabinose 1-phosphate + ADP + H(+). Its function is as follows. Arabinose kinase. Involved in the salvage pathway which converts free L-arabinose to UDP-L-arabinose. May play a role in arabinose transport. In Arabidopsis thaliana (Mouse-ear cress), this protein is L-arabinokinase (ARA1).